A 473-amino-acid chain; its full sequence is UDP-N-acetylmuramate--L-alanine ligase (473 aa).

ATP is bound at residue 112–118; sequence GTHGKTT.

This sequence belongs to the MurCDEF family.

The protein resides in the cytoplasm. It catalyses the reaction UDP-N-acetyl-alpha-D-muramate + L-alanine + ATP = UDP-N-acetyl-alpha-D-muramoyl-L-alanine + ADP + phosphate + H(+). The protein operates within cell wall biogenesis; peptidoglycan biosynthesis. Its function is as follows. Cell wall formation. The sequence is that of UDP-N-acetylmuramate--L-alanine ligase from Nitrosomonas eutropha (strain DSM 101675 / C91 / Nm57).